The chain runs to 265 residues: Tryptophan synthase alpha chain (265 aa).

Residues E47 and D58 each act as proton acceptor in the active site.

It belongs to the TrpA family. In terms of assembly, tetramer of two alpha and two beta chains.

The catalysed reaction is (1S,2R)-1-C-(indol-3-yl)glycerol 3-phosphate + L-serine = D-glyceraldehyde 3-phosphate + L-tryptophan + H2O. The protein operates within amino-acid biosynthesis; L-tryptophan biosynthesis; L-tryptophan from chorismate: step 5/5. The alpha subunit is responsible for the aldol cleavage of indoleglycerol phosphate to indole and glyceraldehyde 3-phosphate. In Methanoregula boonei (strain DSM 21154 / JCM 14090 / 6A8), this protein is Tryptophan synthase alpha chain.